Here is a 156-residue protein sequence, read N- to C-terminus: Cyanate hydratase (156 aa).

Active-site residues include Arg96, Glu99, and Ser122.

The protein belongs to the cyanase family.

The enzyme catalyses cyanate + hydrogencarbonate + 3 H(+) = NH4(+) + 2 CO2. Catalyzes the reaction of cyanate with bicarbonate to produce ammonia and carbon dioxide. In Burkholderia vietnamiensis (strain G4 / LMG 22486) (Burkholderia cepacia (strain R1808)), this protein is Cyanate hydratase.